The sequence spans 526 residues: Peptide chain release factor 3 (526 aa).

One can recognise a tr-type G domain in the interval aspartate 9–leucine 277. GTP-binding positions include serine 18–threonine 25, aspartate 86–histidine 90, and asparagine 140–aspartate 143.

This sequence belongs to the TRAFAC class translation factor GTPase superfamily. Classic translation factor GTPase family. PrfC subfamily.

Its subcellular location is the cytoplasm. Increases the formation of ribosomal termination complexes and stimulates activities of RF-1 and RF-2. It binds guanine nucleotides and has strong preference for UGA stop codons. It may interact directly with the ribosome. The stimulation of RF-1 and RF-2 is significantly reduced by GTP and GDP, but not by GMP. This is Peptide chain release factor 3 from Shewanella frigidimarina (strain NCIMB 400).